We begin with the raw amino-acid sequence, 513 residues long: Light-independent protochlorophyllide reductase subunit B (513 aa).

Aspartate 36 contributes to the [4Fe-4S] cluster binding site. Aspartate 299 serves as the catalytic Proton donor. Position 434-435 (glycine 434–methionine 435) interacts with substrate.

This sequence belongs to the ChlB/BchB/BchZ family. Protochlorophyllide reductase is composed of three subunits; ChlL, ChlN and ChlB. Forms a heterotetramer of two ChlB and two ChlN subunits. The cofactor is [4Fe-4S] cluster.

The protein localises to the plastid. Its subcellular location is the chloroplast. It carries out the reaction chlorophyllide a + oxidized 2[4Fe-4S]-[ferredoxin] + 2 ADP + 2 phosphate = protochlorophyllide a + reduced 2[4Fe-4S]-[ferredoxin] + 2 ATP + 2 H2O. It participates in porphyrin-containing compound metabolism; chlorophyll biosynthesis (light-independent). In terms of biological role, component of the dark-operative protochlorophyllide reductase (DPOR) that uses Mg-ATP and reduced ferredoxin to reduce ring D of protochlorophyllide (Pchlide) to form chlorophyllide a (Chlide). This reaction is light-independent. The NB-protein (ChlN-ChlB) is the catalytic component of the complex. This Cycas taitungensis (Prince sago) protein is Light-independent protochlorophyllide reductase subunit B.